A 168-amino-acid chain; its full sequence is MAQNEELTAEAVEAEETLTSYTSESTSAEDAPKKERPALTVAGAAVGRRKEAVARVRVVPGSGKWTINGRTLDNYFPNKLHQQDVNEPFKILDLEGAYDVIARIHGGGISGQAGALRLGVARSLNEIDVDNNRATLKKAGYLSRDARVIERKKAGLKKARKAQQYSKR.

Positions 1-29 (MAQNEELTAEAVEAEETLTSYTSESTSAE) are enriched in low complexity. The disordered stretch occupies residues 1 to 36 (MAQNEELTAEAVEAEETLTSYTSESTSAEDAPKKER).

The protein belongs to the universal ribosomal protein uS9 family.

The sequence is that of Small ribosomal subunit protein uS9 from Paenarthrobacter aurescens (strain TC1).